A 517-amino-acid chain; its full sequence is uncharacterized protein (517 aa).

Disordered regions lie at residues 16–148, 156–175, and 216–351; these read KDES…TITK, VNKE…NTTT, and KLEK…EENE. Residues 48 to 75 show a composition bias toward low complexity; it reads NNNNNNNNTTTTNNNTNNSNTSTSNNSK. Positions 84-112 are enriched in acidic residues; it reads FDDDDDDGDEEDEEEEDDDDDDDDDDDET. Pro residues predominate over residues 127–143; the sequence is QPQPQPQPQPQPQPPIK. Residues 236-252 show a composition bias toward polar residues; sequence VSSTLSNSFDPNIIHNQ. The segment covering 254–266 has biased composition (pro residues); that stretch reads SPPPPPISIPIPL. Composition is skewed to low complexity over residues 271-320 and 327-347; these read NLNN…NSNI and SSSM…SNNN. Residues 340 to 452 adopt a coiled-coil conformation; sequence DNSSSNNNEE…HQNQQNSMNN (113 aa).

It belongs to the ENTR1 family.

This is an uncharacterized protein from Dictyostelium discoideum (Social amoeba).